A 1430-amino-acid chain; its full sequence is Caskin-1 (1430 aa).

ANK repeat units lie at residues 48 to 77, 81 to 110, 114 to 143, 147 to 176, 188 to 217, and 220 to 249; these read DGFS…AVDI, KGMR…AVNV, EGHI…NPCI, SGKT…CAAL, NGTS…DINR, and KSGT…NAQV. The residue at position 253 (Tyr253) is a Phosphotyrosine. The region spanning 281–347 is the SH3 domain; sequence SAALQVRATK…PSSLGEAIVK (67 aa). Residues 348–372 form a disordered region; that stretch reads RAGSRTGSEPSPPQGGGSLGPSAPP. Position 358 is a phosphoserine (Ser358). The tract at residues 375–471 is CASK-binding; it reads IWVLRKPFAG…PKKLESSSAS (97 aa). Arg398 is modified (omega-N-methylarginine). A compositionally biased stretch (polar residues) spans 421 to 430; it reads QKSVSESSPG. Residues 421 to 472 form a disordered region; the sequence is QKSVSESSPGDSPVKPPEGSSGAARSQPPAAHAGQVYGEQPPKKLESSSASE. Phosphoserine is present on residues Ser423 and Ser432. SAM domains are found at residues 474–537 and 543–607; these read KSAE…LNIP and HKPA…LAEL. Residues Ser635 and Ser648 each carry the phosphoserine modification. A compositionally biased stretch (low complexity) spans 667–679; that stretch reads LSGPAEAGAAAAE. Disordered stretches follow at residues 667–1001, 1015–1040, 1055–1371, and 1388–1407; these read LSGP…SAGS, GGGG…DPGR, GPDG…RQKL, and KIRQ…EKST. Residues 683 to 711 show a composition bias toward polar residues; that stretch reads NHLPATPRTTSRQESSLSGRARHMSSSQE. Phosphoserine is present on residues Ser722 and Ser727. Thr740 carries the post-translational modification Phosphothreonine. Residue Ser790 is modified to Phosphoserine. Residues 847–859 are compositionally biased toward pro residues; that stretch reads PPAPGPVPPPVPA. Phosphoserine occurs at positions 890, 892, and 988. Over residues 1027–1036 the composition is skewed to pro residues; that stretch reads GHPTPRPASP. Thr1066 carries the post-translational modification Phosphothreonine. Residue Ser1068 is modified to Phosphoserine. Positions 1147 to 1159 are enriched in basic and acidic residues; that stretch reads DTVKRRPKAKEPD. Pro residues predominate over residues 1190–1214; sequence PELPPPPPPAEPPPTDLMPLPPLPL. Residue Ser1258 is modified to Phosphoserine. Thr1267 bears the Phosphothreonine mark. The segment covering 1267–1282 has biased composition (pro residues); it reads TPPPVSPKPPPPPTAP. Composition is skewed to low complexity over residues 1283–1298, 1308–1326, and 1344–1358; these read KPAK…SATP, PPAA…SASP, and PRAA…PVAS. Ser1362 carries the post-translational modification Phosphoserine. Basic and acidic residues predominate over residues 1388–1406; it reads KIRQEDGQGPRPSSIEEKS.

In terms of assembly, polymerizes, via the tandem SAM domains, to form long, 8 nM wide fibers, upon which other proteins can assemble. Binds the CaM kinase domain of CASK. Forms a ternary complex with CASK and LIN7A, LIN7B or LIN7C. Competes with APBA1 that forms a similar complex with CASK and LIN7 proteins. The tripartite complex CASKIN1/CASK/LIN7(A/B/C) binds the cytoplasmic tail of NRXN1. In terms of tissue distribution, expressed in brain. Localized primarily to the neuropil and enriched in synaptic areas (at protein level).

The protein localises to the cytoplasm. Functionally, may link the scaffolding protein CASK to downstream intracellular effectors. In Rattus norvegicus (Rat), this protein is Caskin-1 (Caskin1).